Reading from the N-terminus, the 238-residue chain is 1-(5-phosphoribosyl)-5-[(5-phosphoribosylamino)methylideneamino] imidazole-4-carboxamide isomerase (238 aa).

Residue Asp8 is the Proton acceptor of the active site. Asp130 serves as the catalytic Proton donor.

It belongs to the HisA/HisF family.

The protein resides in the cytoplasm. It catalyses the reaction 1-(5-phospho-beta-D-ribosyl)-5-[(5-phospho-beta-D-ribosylamino)methylideneamino]imidazole-4-carboxamide = 5-[(5-phospho-1-deoxy-D-ribulos-1-ylimino)methylamino]-1-(5-phospho-beta-D-ribosyl)imidazole-4-carboxamide. Its pathway is amino-acid biosynthesis; L-histidine biosynthesis; L-histidine from 5-phospho-alpha-D-ribose 1-diphosphate: step 4/9. In Methanococcus maripaludis (strain C6 / ATCC BAA-1332), this protein is 1-(5-phosphoribosyl)-5-[(5-phosphoribosylamino)methylideneamino] imidazole-4-carboxamide isomerase.